Here is a 380-residue protein sequence, read N- to C-terminus: Chorismate synthase (380 aa).

Arg-48 is an NADP(+) binding site. FMN is bound by residues 126–128 (HFS), Gly-300, 315–319 (KPISS), and Arg-342.

This sequence belongs to the chorismate synthase family. Homotetramer. The cofactor is FMNH2.

The catalysed reaction is 5-O-(1-carboxyvinyl)-3-phosphoshikimate = chorismate + phosphate. The protein operates within metabolic intermediate biosynthesis; chorismate biosynthesis; chorismate from D-erythrose 4-phosphate and phosphoenolpyruvate: step 7/7. Its function is as follows. Catalyzes the anti-1,4-elimination of the C-3 phosphate and the C-6 proR hydrogen from 5-enolpyruvylshikimate-3-phosphate (EPSP) to yield chorismate, which is the branch point compound that serves as the starting substrate for the three terminal pathways of aromatic amino acid biosynthesis. This reaction introduces a second double bond into the aromatic ring system. This is Chorismate synthase from Lancefieldella parvula (strain ATCC 33793 / DSM 20469 / CCUG 32760 / JCM 10300 / KCTC 3663 / VPI 0546 / 1246) (Atopobium parvulum).